Here is a 474-residue protein sequence, read N- to C-terminus: Trehalose-6-phosphate synthase (474 aa).

Arginine 10 lines the D-glucose 6-phosphate pocket. 22 to 23 (GG) contacts UDP-alpha-D-glucose. Residues tyrosine 77 and aspartate 131 each contribute to the D-glucose 6-phosphate site. Arginine 263 and lysine 268 together coordinate UDP-alpha-D-glucose. Arginine 301 provides a ligand contact to D-glucose 6-phosphate. UDP-alpha-D-glucose is bound by residues phenylalanine 340 and 366–370 (LVAKE).

Belongs to the glycosyltransferase 20 family. As to quaternary structure, homotetramer.

The enzyme catalyses D-glucose 6-phosphate + UDP-alpha-D-glucose = alpha,alpha-trehalose 6-phosphate + UDP + H(+). The protein operates within glycan biosynthesis; trehalose biosynthesis. Probably involved in the osmoprotection via the biosynthesis of trehalose. Catalyzes the transfer of glucose from UDP-alpha-D-glucose (UDP-Glc) to D-glucose 6-phosphate (Glc-6-P) to form trehalose-6-phosphate. Acts with retention of the anomeric configuration of the UDP-sugar donor. The sequence is that of Trehalose-6-phosphate synthase from Shigella dysenteriae serotype 1 (strain Sd197).